A 362-amino-acid chain; its full sequence is MTENSEKIDRLNDLTTFISTKTGVKGLVDAEITEVPSMFHVPSSILSNNRPSDISGLNLTVPIIDLGDRNTSSRNVVISKIKDAAENWGFFQVINHDVPLTVLEEIKESVRRFHEQDPVVKNQYLPTDNNKRFVYNNDFDLYHSSPLNWRDSFTCYIAPDPPNPEEIPLACRSAVIEYTKHVMELGAVLFQLLSEALGLDSETLKRIDCLKGLFMLCHYYPPCPQPDLTLGISKHTDNSFLTLLLQDQIGGLQVLHEDYWVDVPPVPGALVVNIGDFMQLITNDKFLSVEHRVRPNKDRPRISVACFFSSSLSPNSTVYGPIKDLLSDENPAKYKDITIPEYTAGFLASIFDEKSYLTNYMI.

The Fe2OG dioxygenase domain maps to 211 to 310 (KGLFMLCHYY…RISVACFFSS (100 aa)). Residues H235, D237, and H291 each coordinate Fe cation. R301 contributes to the 2-oxoglutarate binding site.

The protein belongs to the iron/ascorbate-dependent oxidoreductase family. It depends on Fe(2+) as a cofactor.

The protein is 1-aminocyclopropane-1-carboxylate oxidase homolog 10 of Arabidopsis thaliana (Mouse-ear cress).